A 170-amino-acid chain; its full sequence is Flavodoxin (170 aa).

The Flavodoxin-like domain occupies isoleucine 4 to lysine 165.

The protein belongs to the flavodoxin family. It depends on FMN as a cofactor.

Its function is as follows. Low-potential electron donor to a number of redox enzymes. The protein is Flavodoxin (isiB) of Picosynechococcus sp. (strain ATCC 27264 / PCC 7002 / PR-6) (Agmenellum quadruplicatum).